An 88-amino-acid polypeptide reads, in one-letter code: Sec-independent protein translocase protein TatA (88 aa).

The chain crosses the membrane as a helical span at residues 1-21 (MGGISITQLLIIASIVVVLFG). The disordered stretch occupies residues 39–88 (FKKSMSEDDNTTSTSSDKSSQDADFTAPPIEPKANLACPDEAKNKDKEHV). Residues 49–62 (TTSTSSDKSSQDAD) are compositionally biased toward low complexity. The span at 78-88 (DEAKNKDKEHV) shows a compositional bias: basic and acidic residues.

The protein belongs to the TatA/E family. As to quaternary structure, the Tat system comprises two distinct complexes: a TatABC complex, containing multiple copies of TatA, TatB and TatC subunits, and a separate TatA complex, containing only TatA subunits. Substrates initially bind to the TatABC complex, which probably triggers association of the separate TatA complex to form the active translocon.

The protein resides in the cell inner membrane. Functionally, part of the twin-arginine translocation (Tat) system that transports large folded proteins containing a characteristic twin-arginine motif in their signal peptide across membranes. TatA could form the protein-conducting channel of the Tat system. This is Sec-independent protein translocase protein TatA from Sodalis glossinidius (strain morsitans).